Here is a 685-residue protein sequence, read N- to C-terminus: Amino acid transporter heavy chain SLC3A1 (685 aa).

Positions 1 to 10 (MDEDKGKRDP) are enriched in basic and acidic residues. The interval 1-53 (MDEDKGKRDPIQMSLKGCRTNNGFVQNEDIPEQDPDPGSRDTPQPNAVSIPAP) is disordered. Over 1–88 (MDEDKGKRDP…ARYRVPREIL (88 aa)) the chain is Cytoplasmic. A helical; Signal-anchor for type II membrane protein membrane pass occupies residues 89 to 109 (FWLTVVSVFLLIGATIAIIVI). Residues 110 to 685 (SPKCLDWWQA…SALDILYSSC (576 aa)) lie on the Extracellular side of the membrane. A Ca(2+)-binding site is contributed by Asn-213. Residues Asn-213, Asn-240, and Asn-260 are each glycosylated (N-linked (GlcNAc...) asparagine). Cysteines 241 and 272 form a disulfide. Asp-283, Phe-317, Leu-318, and Glu-320 together coordinate Ca(2+). Residue Asn-331 is glycosylated (N-linked (GlcNAc...) asparagine). Ser-385 is subject to Phosphoserine. Asn-512 and Asn-522 each carry an N-linked (GlcNAc...) asparagine glycan. 2 disulfide bridges follow: Cys-570–Cys-666 and Cys-673–Cys-685.

As to quaternary structure, disulfide-linked heterodimer composed of the catalytic light subunit SLC7A9 and the heavy subunit SLC3A1. The heterodimer is the minimal functional unit. Assembles in non-covalently linked heterotetramers (dimers of heterodimers) and higher order oligomers; the oligomerization is mediated by SLC3A1 likely to prevent degradation in the endoplasmic reticulum and facilitate heteromer trafficking to the plasma membrane. Disulfide-linked heterodimer composed of the catalytic light subunit SLC7A13 and the heavy subunit SLC3A1. In terms of tissue distribution, expressed in the brush border membrane in the kidney (at protein level). Highly expressed in renal tubules in the outer stripe of the outer medulla and medullary ray (at protein level). Also detected in the renal cortex. More abundant in male than female kidneys.

It is found in the cell membrane. Its subcellular location is the apical cell membrane. Functionally, acts as a chaperone that facilitates biogenesis and trafficking of functional transporter heteromers to the plasma membrane. Associates with SLC7A9 to form a functional transporter complex that mediates the electrogenic exchange between cationic amino acids and neutral amino acids, with a stoichiometry of 1:1. SLC7A9-SLC3A1 transporter has system b(0,+)-like activity with high affinity for extracellular cationic amino acids and L-cystine and lower affinity for intracellular neutral amino acids. Substrate exchange is driven by high concentration of intracellular neutral amino acids and the intracellular reduction of L-cystine to L-cysteine. SLC7A9-SLC3A1 acts as a major transporter for reabsorption of L-cystine and dibasic amino acids across the brush border membrane in early proximal tubules. Associates with SLC7A13 to form a functional complex that transports anionic and neutral amino acids via exchange or facilitated diffusion. SLC7A13-SLC3A1 may act as a major transporter for L-cystine in late proximal tubules, ensuring its reabsorption from the luminal fluid in exchange for cytosolic L-glutamate or L-aspartate. The chain is Amino acid transporter heavy chain SLC3A1 from Mus musculus (Mouse).